The following is a 705-amino-acid chain: Variediene synthase (705 aa).

The interval 9–331 (LNSTLSSVVE…RCPRYHPWLC (323 aa)) is terpene cyclase. Asp100 lines the Mg(2+) pocket. Residues Asp100, 186–189 (RIID), Asn230, 234–238 (SFDIE), and 325–326 (RY) each bind substrate. Residues 100–104 (DNVVE) carry the DDXXD 1 motif. The NSE/DTE signature appears at 230–238 (NDYFSFDIE). Residues 332–705 (KEAASLLHQD…VRLLIHRLKV (374 aa)) form a prenyltransferase region. The segment covering 349–366 (GRKPQALEEYRSRSHSES) has biased composition (basic and acidic residues). Positions 349 to 374 (GRKPQALEEYRSRSHSESDLSDASPT) are disordered. Residues Lys424, Arg427, and His456 each contribute to the isopentenyl diphosphate site. Positions 463 and 467 each coordinate Mg(2+). Residues 463–467 (DDIED) carry the DDXXD 2 motif. A dimethylallyl diphosphate-binding site is contributed by Arg472. Position 473 (Arg473) interacts with isopentenyl diphosphate. 6 residues coordinate dimethylallyl diphosphate: Lys550, Thr551, Gln589, Asn596, Lys605, and Lys615.

It in the N-terminal section; belongs to the terpene synthase family. In the C-terminal section; belongs to the FPP/GGPP synthase family. Hexamer. Mg(2+) is required as a cofactor.

It carries out the reaction isopentenyl diphosphate + (2E,6E)-farnesyl diphosphate = (2E,6E,10E)-geranylgeranyl diphosphate + diphosphate. The enzyme catalyses isopentenyl diphosphate + (2E,6E,10E)-geranylgeranyl diphosphate = (2E,6E,10E,14E)-geranylfarnesyl diphosphate + diphosphate. It catalyses the reaction (2E,6E,10E)-geranylgeranyl diphosphate = variediene + diphosphate. The catalysed reaction is (2E,6E,10E,14E)-geranylfarnesyl diphosphate = (R,2E)-alpha-cericerene + diphosphate. It participates in secondary metabolite biosynthesis; terpenoid biosynthesis. Its function is as follows. Bifunctional terpene synthase that converts dimethylallyl diphosphate (DMAPP) and isopentenyl diphosphate (IPP) into variediene as a single product. The C-terminal prenyltransferase (PT) domain of EvVS catalyzes formation of geranylgeranyl pyrophosphate (GGPP), whereas the N-terminal terpene cyclase (TC) domain catalyzes the cyclization of GGPP to variediene. The PT domain can also synthesize geranylfarnesyl pyrophosphate (GFPP) from the C5 isoprene units in vitro, while the TC domain is able to cyclize GFPP to the sesterterpene (2E)-alpha-cericerene. The chain is Variediene synthase from Emericella variicolor (Aspergillus stellatus).